Reading from the N-terminus, the 378-residue chain is Myoglobin (378 aa).

His-332 is a heme binding site.

It belongs to the indoleamine 2,3-dioxygenase family. In terms of assembly, homodimer. Requires heme as cofactor.

Serves a reserve supply of oxygen and facilitates the movement of oxygen within muscles. This is Myoglobin from Haliotis madaka (Giant abalone).